The primary structure comprises 378 residues: Cln5-like protein 1 (378 aa).

The signal sequence occupies residues 1-20 (MNKIIIFILFLISILQSVRG). N-linked (GlcNAc...) asparagine glycans are attached at residues asparagine 63, asparagine 93, asparagine 135, asparagine 181, asparagine 220, asparagine 226, asparagine 254, and asparagine 280. The chain crosses the membrane as a helical span at residues 308-328 (WIFIIILLSFTTVYLVGGILI).

It belongs to the CLN5 family.

The protein resides in the membrane. The protein is Cln5-like protein 1 (cln5la) of Dictyostelium discoideum (Social amoeba).